The sequence spans 269 residues: NAD kinase (269 aa).

The active-site Proton acceptor is the Asp45. NAD(+) contacts are provided by residues 45–46 (DG), 122–123 (NE), Arg149, Asp151, and Ala186.

The protein belongs to the NAD kinase family. It depends on a divalent metal cation as a cofactor.

It is found in the cytoplasm. The enzyme catalyses NAD(+) + ATP = ADP + NADP(+) + H(+). Functionally, involved in the regulation of the intracellular balance of NAD and NADP, and is a key enzyme in the biosynthesis of NADP. Catalyzes specifically the phosphorylation on 2'-hydroxyl of the adenosine moiety of NAD to yield NADP. The sequence is that of NAD kinase from Staphylococcus saprophyticus subsp. saprophyticus (strain ATCC 15305 / DSM 20229 / NCIMB 8711 / NCTC 7292 / S-41).